The sequence spans 254 residues: Persulfide dioxygenase ETHE1, mitochondrial (254 aa).

A mitochondrion-targeting transit peptide spans 1-7 (MAEAVLR). Phosphoserine is present on residues S14 and S19. An N6-acetyllysine modification is found at K66. The Fe cation site is built by H79, H135, and D154. At K172 the chain carries N6-acetyllysine; alternate. Residue K172 is modified to N6-succinyllysine; alternate.

The protein belongs to the metallo-beta-lactamase superfamily. Glyoxalase II family. In terms of assembly, homodimer. Monomer. Interacts with TST. May interact with RELA. Fe(2+) serves as cofactor. Ubiquitously expressed.

Its subcellular location is the cytoplasm. The protein localises to the nucleus. It localises to the mitochondrion matrix. The catalysed reaction is S-sulfanylglutathione + O2 + H2O = sulfite + glutathione + 2 H(+). With respect to regulation, glutathione increases enzyme activity. In terms of biological role, sulfur dioxygenase that plays an essential role in hydrogen sulfide catabolism in the mitochondrial matrix. Hydrogen sulfide (H(2)S) is first oxidized by SQRDL, giving rise to cysteine persulfide residues. ETHE1 consumes molecular oxygen to catalyze the oxidation of the persulfide, once it has been transferred to a thiophilic acceptor, such as glutathione (R-SSH). Plays an important role in metabolic homeostasis in mitochondria by metabolizing hydrogen sulfide and preventing the accumulation of supraphysiological H(2)S levels that have toxic effects, due to the inhibition of cytochrome c oxidase. First described as a protein that can shuttle between the nucleus and the cytoplasm and suppress p53-induced apoptosis by sequestering the transcription factor RELA/NFKB3 in the cytoplasm and preventing its accumulation in the nucleus. This is Persulfide dioxygenase ETHE1, mitochondrial (ETHE1) from Homo sapiens (Human).